A 454-amino-acid chain; its full sequence is UPF0210 protein BL1209 (454 aa).

This sequence belongs to the UPF0210 family. In terms of assembly, homodimer.

The sequence is that of UPF0210 protein BL1209 from Bifidobacterium longum (strain NCC 2705).